We begin with the raw amino-acid sequence, 567 residues long: TGF-beta receptor type-2 (567 aa).

A signal peptide spans 1 to 23 (MGRGLLRGLWPLHIVLWTRIAST). Topologically, residues 24–166 (IPPHVPKSVN…SPDLLLVIIQ (143 aa)) are extracellular. Cystine bridges form between Cys-51–Cys-84, Cys-54–Cys-71, Cys-61–Cys-67, Cys-77–Cys-101, Cys-121–Cys-136, and Cys-138–Cys-143. Residues Asn-70 and Asn-94 are each glycosylated (N-linked (GlcNAc...) asparagine). The chain crosses the membrane as a helical span at residues 167–187 (VTGVSLLPPLGIAIAVIAIFY). Residues 188–567 (CYRVHRQQKL…PEDGSLNTTK (380 aa)) lie on the Cytoplasmic side of the membrane. The 303-residue stretch at 244-546 (IELDTLVGKG…RFSELEHPDR (303 aa)) folds into the Protein kinase domain. Residues 250-258 (VGKGRFAEV) and Lys-277 each bind ATP. Asp-379 serves as the catalytic Proton acceptor. 3 positions are modified to phosphoserine: Ser-409, Ser-548, and Ser-553. Positions 546–567 (RLSGRSCSQEKIPEDGSLNTTK) are disordered.

This sequence belongs to the protein kinase superfamily. TKL Ser/Thr protein kinase family. TGFB receptor subfamily. In terms of assembly, homodimer. Heterohexamer; TGFB1, TGFB2 and TGFB3 homodimeric ligands assemble a functional receptor composed of two TGFBR1 and TGFBR2 heterodimers to form a ligand-receptor heterohexamer. The respective affinity of TGFRB1 and TGFRB2 for the ligands may modulate the kinetics of assembly of the receptor and may explain the different biological activities of TGFB1, TGFB2 and TGFB3. Component of a complex composed of TSC22D1 (via N-terminus), TGFBR1 and TGFBR2; the interaction between TSC22D1 and TGFBR1 is inhibited by SMAD7 and promoted by TGFB1. Interacts with DAXX. Interacts with DYNLT4. Interacts with ZFYVE9; ZFYVE9 recruits SMAD2 and SMAD3 to the TGF-beta receptor. Interacts with and is activated by SCUBE3; this interaction does not affect TGFB1-binding to TGFBR2. Interacts with VPS39; this interaction is independent of the receptor kinase activity and of the presence of TGF-beta. Interacts with CLU. It depends on Mg(2+) as a cofactor. The cofactor is Mn(2+). Phosphorylated on a Ser/Thr residue in the cytoplasmic domain.

The protein localises to the cell membrane. The protein resides in the membrane raft. The catalysed reaction is L-threonyl-[receptor-protein] + ATP = O-phospho-L-threonyl-[receptor-protein] + ADP + H(+). It catalyses the reaction L-seryl-[receptor-protein] + ATP = O-phospho-L-seryl-[receptor-protein] + ADP + H(+). In terms of biological role, transmembrane serine/threonine kinase forming with the TGF-beta type I serine/threonine kinase receptor, TGFBR1, the non-promiscuous receptor for the TGF-beta cytokines TGFB1, TGFB2 and TGFB3. Transduces the TGFB1, TGFB2 and TGFB3 signal from the cell surface to the cytoplasm and is thus regulating a plethora of physiological and pathological processes including cell cycle arrest in epithelial and hematopoietic cells, control of mesenchymal cell proliferation and differentiation, wound healing, extracellular matrix production, immunosuppression and carcinogenesis. The formation of the receptor complex composed of 2 TGFBR1 and 2 TGFBR2 molecules symmetrically bound to the cytokine dimer results in the phosphorylation and the activation of TGFRB1 by the constitutively active TGFBR2. Activated TGFBR1 phosphorylates SMAD2 which dissociates from the receptor and interacts with SMAD4. The SMAD2-SMAD4 complex is subsequently translocated to the nucleus where it modulates the transcription of the TGF-beta-regulated genes. This constitutes the canonical SMAD-dependent TGF-beta signaling cascade. Also involved in non-canonical, SMAD-independent TGF-beta signaling pathways. The protein is TGF-beta receptor type-2 (Tgfbr2) of Rattus norvegicus (Rat).